The sequence spans 206 residues: 2,3-bisphosphoglycerate-dependent phosphoglycerate mutase (206 aa).

Substrate-binding positions include 9 to 16 (RHGQSEWN), 22 to 23 (TG), Arg61, 88 to 91 (ERDY), Lys99, 115 to 116 (RR), and 159 to 160 (GN). His10 functions as the Tele-phosphohistidine intermediate in the catalytic mechanism. The active-site Proton donor/acceptor is the Glu88.

The protein belongs to the phosphoglycerate mutase family. BPG-dependent PGAM subfamily. As to quaternary structure, homodimer.

The enzyme catalyses (2R)-2-phosphoglycerate = (2R)-3-phosphoglycerate. The protein operates within carbohydrate degradation; glycolysis; pyruvate from D-glyceraldehyde 3-phosphate: step 3/5. Catalyzes the interconversion of 2-phosphoglycerate and 3-phosphoglycerate. The polypeptide is 2,3-bisphosphoglycerate-dependent phosphoglycerate mutase (Brucella melitensis biotype 2 (strain ATCC 23457)).